The primary structure comprises 490 residues: Histone-lysine N-methyltransferase SMYD1 (490 aa).

Positions 7-253 constitute an SET domain; it reads ENVEVFTAEG…EGEELTVSYI (247 aa). 17–19 is an S-adenosyl-L-methionine binding site; sequence KGR. Positions 52, 55, 65, 68, 74, 78, 86, and 90 each coordinate Zn(2+). Residues 52 to 90 form an MYND-type zinc finger; it reads CHTCFKRQEKLHRCGQCKFAHYCDRTCQKDAWLNHKNEC. S-adenosyl-L-methionine-binding positions include histidine 135 and 205 to 206; that span reads NH. Cysteine 208 lines the Zn(2+) pocket. 270 to 272 is a binding site for S-adenosyl-L-methionine; sequence YYF. Zn(2+) contacts are provided by cysteine 274, cysteine 276, and cysteine 279.

The protein belongs to the class V-like SAM-binding methyltransferase superfamily. Interacts with HDAC1, HDAC2 and HDAC3. Interacts (via MYND-type zinc finger) with NACA isoform skNAC. As to expression, expression seems mostly restricted to heart and skeletal muscle.

It is found in the cytoplasm. The protein resides in the nucleus. It carries out the reaction L-lysyl(4)-[histone H3] + 3 S-adenosyl-L-methionine = N(6),N(6),N(6)-trimethyl-L-lysyl(4)-[histone H3] + 3 S-adenosyl-L-homocysteine + 3 H(+). Methylates histone H3 at 'Lys-4' (H3K4me), seems able to perform both mono-, di-, and trimethylation. Acts as a transcriptional repressor. Essential for cardiomyocyte differentiation and cardiac morphogenesis. The polypeptide is Histone-lysine N-methyltransferase SMYD1 (SMYD1) (Homo sapiens (Human)).